Consider the following 138-residue polypeptide: MLQPKRTKYRRTHRLQHDKGEAHTGNKVSFGKFGLQAKTSAWITARQIESARIAITRYMGREGQVFIRIFPQLSLTSKPIGVRMGKGKGSPEKWVAVAKVNTMLFEVSGVKDEVAKEALRLGSYKLPVKSKIVLKESE.

Residues 1–14 (MLQPKRTKYRRTHR) show a composition bias toward basic residues. Residues 1 to 24 (MLQPKRTKYRRTHRLQHDKGEAHT) form a disordered region. Residues 15–24 (LQHDKGEAHT) show a composition bias toward basic and acidic residues.

Belongs to the universal ribosomal protein uL16 family. In terms of assembly, part of the 50S ribosomal subunit.

Its function is as follows. Binds 23S rRNA and is also seen to make contacts with the A and possibly P site tRNAs. This Mycoplasma mobile (strain ATCC 43663 / 163K / NCTC 11711) (Mesomycoplasma mobile) protein is Large ribosomal subunit protein uL16.